Reading from the N-terminus, the 159-residue chain is Ribosomal RNA large subunit methyltransferase H (159 aa).

S-adenosyl-L-methionine-binding positions include Leu-76, Gly-108, and 127–132 (FSKMTF).

This sequence belongs to the RNA methyltransferase RlmH family. Homodimer.

The protein localises to the cytoplasm. It carries out the reaction pseudouridine(1915) in 23S rRNA + S-adenosyl-L-methionine = N(3)-methylpseudouridine(1915) in 23S rRNA + S-adenosyl-L-homocysteine + H(+). Specifically methylates the pseudouridine at position 1915 (m3Psi1915) in 23S rRNA. The chain is Ribosomal RNA large subunit methyltransferase H from Staphylococcus aureus (strain Mu3 / ATCC 700698).